Reading from the N-terminus, the 138-residue chain is Ribulose bisphosphate carboxylase small subunit (138 aa).

It belongs to the RuBisCO small chain family. Heterohexadecamer of 8 large and 8 small subunits.

The protein resides in the plastid. The protein localises to the chloroplast. Functionally, ruBisCO catalyzes two reactions: the carboxylation of D-ribulose 1,5-bisphosphate, the primary event in carbon dioxide fixation, as well as the oxidative fragmentation of the pentose substrate in the photorespiration process. Both reactions occur simultaneously and in competition at the same active site. Although the small subunit is not catalytic it is essential for maximal activity. This chain is Ribulose bisphosphate carboxylase small subunit, found in Porphyra purpurea (Red seaweed).